A 355-amino-acid chain; its full sequence is 12-oxophytodienoate reductase-like protein (355 aa).

FMN is bound by residues 30-32 (ALT), alanine 63, and glutamine 105. 175 to 178 (NASS) is a binding site for substrate. The active-site Proton donor is the tyrosine 181. Arginine 265 lines the substrate pocket. Residues glycine 288 and 309–310 (GR) contribute to the FMN site.

It belongs to the NADH:flavin oxidoreductase/NADH oxidase family. FMN is required as a cofactor. As to expression, weakly expressed in flowers and roots.

Its subcellular location is the cytoplasm. May be involved in the biosynthesis or metabolism of oxylipin signaling molecules. The polypeptide is 12-oxophytodienoate reductase-like protein (OPR2) (Solanum lycopersicum (Tomato)).